Consider the following 252-residue polypeptide: Large ribosomal subunit protein uL3 (252 aa).

Position 169 is an N5-methylglutamine (Gln169).

It belongs to the universal ribosomal protein uL3 family. Part of the 50S ribosomal subunit. Forms a cluster with proteins L14 and L19. In terms of processing, methylated by PrmB.

Its function is as follows. One of the primary rRNA binding proteins, it binds directly near the 3'-end of the 23S rRNA, where it nucleates assembly of the 50S subunit. This chain is Large ribosomal subunit protein uL3, found in Hyphomonas neptunium (strain ATCC 15444).